The sequence spans 326 residues: 5-dehydro-2-deoxygluconokinase (326 aa).

This sequence belongs to the carbohydrate kinase PfkB family.

It carries out the reaction 5-dehydro-2-deoxy-D-gluconate + ATP = 6-phospho-5-dehydro-2-deoxy-D-gluconate + ADP + H(+). The protein operates within polyol metabolism; myo-inositol degradation into acetyl-CoA; acetyl-CoA from myo-inositol: step 5/7. Catalyzes the phosphorylation of 5-dehydro-2-deoxy-D-gluconate (2-deoxy-5-keto-D-gluconate or DKG) to 6-phospho-5-dehydro-2-deoxy-D-gluconate (DKGP). The chain is 5-dehydro-2-deoxygluconokinase from Shouchella clausii (strain KSM-K16) (Alkalihalobacillus clausii).